The sequence spans 184 residues: Shikimate kinase (184 aa).

ATP is bound at residue Gly17–Thr22. Thr21 is a binding site for Mg(2+). 3 residues coordinate substrate: Asp39, Arg63, and Gly85. Arg123 contacts ATP. Arg142 is a substrate binding site.

The protein belongs to the shikimate kinase family. In terms of assembly, monomer. Mg(2+) is required as a cofactor.

The protein resides in the cytoplasm. The catalysed reaction is shikimate + ATP = 3-phosphoshikimate + ADP + H(+). It participates in metabolic intermediate biosynthesis; chorismate biosynthesis; chorismate from D-erythrose 4-phosphate and phosphoenolpyruvate: step 5/7. Its function is as follows. Catalyzes the specific phosphorylation of the 3-hydroxyl group of shikimic acid using ATP as a cosubstrate. The protein is Shikimate kinase of Burkholderia lata (strain ATCC 17760 / DSM 23089 / LMG 22485 / NCIMB 9086 / R18194 / 383).